The following is a 142-amino-acid chain: Ribonuclease VapC31 (142 aa).

The PINc domain occupies 3-139 (LLDANVLLAA…ARFASVRHIR (137 aa)). Positions 5 and 108 each coordinate Mg(2+).

The protein belongs to the PINc/VapC protein family. The cofactor is Mg(2+).

Toxic component of a type II toxin-antitoxin (TA) system. An RNase. Its toxic effect is neutralized by coexpression with cognate antitoxin VapB31. The chain is Ribonuclease VapC31 from Mycobacterium tuberculosis (strain CDC 1551 / Oshkosh).